The chain runs to 515 residues: Brahma-associated protein of 60 kDa (515 aa).

Residues 1 to 124 (MSQRFAPGQA…GGSKSDFATA (124 aa)) are disordered. Pro residues predominate over residues 17 to 34 (QPPPPAPGMRPYPPPGAS). A compositionally biased stretch (low complexity) spans 49–62 (PVPGTANVAGVPGV). The segment covering 90 to 103 (TGAGGGGVGSGGGS) has biased composition (gly residues). A DNA-binding region spans residues 116 to 204 (GSKSDFATAK…SKEPTNDGEE (89 aa)). The 78-residue stretch at 291–368 (YQPLQFKLDP…PQRLNPLLHP (78 aa)) folds into the SWIB/MDM2 domain.

In terms of assembly, there are 2 distinct Brahma complexes in the fruit fly, the Brahma-associated proteins (BAP) and Polybromo-containing BAP (PBAP) complexes, which are composed of common subunits Brm, Mor, Snr1/Bap45, Bap111/Dalo, Bap55, Bap60 and Act42A/Bap47, and additional signature subunits osa in the BAP complex and Polybromo and Bap170 in the PBAP complex. Interacts with sisA and sc. Interacts with mor. Interacts with p53. Interacts with erm (via N-terminal). Interacts with akirin; interaction is immune stimulation-dependent; activates selected Rel target gene promoters.

In terms of biological role, involved in the recruitment and site-specific anchoring of the Brahma complex at specific promoter sites. The Brahma complex is a multiprotein complex which is the equivalent of the yeast SWI/SNF complex and acts by remodeling the chromatin by catalyzing an ATP-dependent alteration in the structure of nucleosomal DNA. This complex can both serve as a transcriptional coactivator or corepressor, depending on the context. Participates in X-chromosomal dosage compensation. Participates in neurogenesis. The sequence is that of Brahma-associated protein of 60 kDa (Bap60) from Drosophila melanogaster (Fruit fly).